Consider the following 202-residue polypeptide: LexA repressor (202 aa).

The H-T-H motif DNA-binding region spans 28–48 (RAEIASRLGFRSPNAAEEHLK). Catalysis depends on for autocatalytic cleavage activity residues serine 119 and lysine 156.

This sequence belongs to the peptidase S24 family. Homodimer.

It catalyses the reaction Hydrolysis of Ala-|-Gly bond in repressor LexA.. In terms of biological role, represses a number of genes involved in the response to DNA damage (SOS response), including recA and lexA. Binds to the 16 bp palindromic sequence 5'-CTGTATATATATACAG-3'. In the presence of single-stranded DNA, RecA interacts with LexA causing an autocatalytic cleavage which disrupts the DNA-binding part of LexA, leading to derepression of the SOS regulon and eventually DNA repair. This chain is LexA repressor, found in Sodalis glossinidius (strain morsitans).